Here is a 279-residue protein sequence, read N- to C-terminus: Oxygen-dependent coproporphyrinogen-III oxidase (279 aa).

A substrate-binding site is contributed by S102. A divalent metal cation is bound by residues H106 and H116. The active-site Proton donor is the H116. 118–120 is a substrate binding site; that stretch reads NTR. Positions 149 and 179 each coordinate a divalent metal cation. Positions 244-279 are important for dimerization; sequence YVEFNLLYDRGTKFGLMTDGNVEAILMSLPPEVKFN.

The protein belongs to the aerobic coproporphyrinogen-III oxidase family. As to quaternary structure, homodimer. A divalent metal cation serves as cofactor.

The protein localises to the cytoplasm. The catalysed reaction is coproporphyrinogen III + O2 + 2 H(+) = protoporphyrinogen IX + 2 CO2 + 2 H2O. It participates in porphyrin-containing compound metabolism; protoporphyrin-IX biosynthesis; protoporphyrinogen-IX from coproporphyrinogen-III (O2 route): step 1/1. Functionally, involved in the heme biosynthesis. Catalyzes the aerobic oxidative decarboxylation of propionate groups of rings A and B of coproporphyrinogen-III to yield the vinyl groups in protoporphyrinogen-IX. The polypeptide is Oxygen-dependent coproporphyrinogen-III oxidase (Rickettsia felis (strain ATCC VR-1525 / URRWXCal2) (Rickettsia azadi)).